Here is a 203-residue protein sequence, read N- to C-terminus: Glycerol-3-phosphate acyltransferase (203 aa).

5 helical membrane-spanning segments follow: residues 10-30, 60-80, 88-108, 118-138, and 162-182; these read LLLG…FGIM, LAAF…VFLA, AAQL…FLGF, LGTL…IWAI, and FTLG…LIFL.

It belongs to the PlsY family. In terms of assembly, probably interacts with PlsX.

The protein resides in the cell inner membrane. It catalyses the reaction an acyl phosphate + sn-glycerol 3-phosphate = a 1-acyl-sn-glycero-3-phosphate + phosphate. The protein operates within lipid metabolism; phospholipid metabolism. Catalyzes the transfer of an acyl group from acyl-phosphate (acyl-PO(4)) to glycerol-3-phosphate (G3P) to form lysophosphatidic acid (LPA). This enzyme utilizes acyl-phosphate as fatty acyl donor, but not acyl-CoA or acyl-ACP. In Jannaschia sp. (strain CCS1), this protein is Glycerol-3-phosphate acyltransferase.